A 375-amino-acid chain; its full sequence is uncharacterized protein (375 aa).

It belongs to the mimivirus L17x/L18x family.

This is an uncharacterized protein from Acanthamoeba polyphaga (Amoeba).